The sequence spans 302 residues: Nucleotide-binding protein SERP0433 (302 aa).

ATP is bound at residue 18-25 (GMSGAGKS). Residue 69–72 (DLRG) coordinates GTP.

It belongs to the RapZ-like family.

Displays ATPase and GTPase activities. This chain is Nucleotide-binding protein SERP0433, found in Staphylococcus epidermidis (strain ATCC 35984 / DSM 28319 / BCRC 17069 / CCUG 31568 / BM 3577 / RP62A).